The primary structure comprises 328 residues: MQNNNILVVGGAGYIGSHTCLQLAAKGYQPVVYDNLSNGHEEFVKWGVLEKGDIRDRQRLDEVLARHKPRAILHFAAMIEVGESVKDPAAFYDNNVIGTLTLLSAALAAGIDAFVFSSTCATYGLPDSVPMDESHKQAPINPYGRTKWICEQALKDYGLYKGLRSVILRYFNAAGADFEGRIGEWHEPETHAIPLAIDAALGRREGFKVFGTDYDTRDGTCVRDYIHVLDLADAHVRAVDYLLEGGESVALNLGTGTGTTVKELLDAIEKVAKRPFNIGYAERREGDSTTLVANNDKARQVLGWEPQYDLAAITESAWNWHSRRNQGG.

Threonine 119 lines the substrate pocket. The active-site Proton acceptor is tyrosine 143.

It belongs to the NAD(P)-dependent epimerase/dehydratase family. NAD(+) serves as cofactor.

It carries out the reaction UDP-alpha-D-glucose = UDP-alpha-D-galactose. It participates in carbohydrate metabolism; galactose metabolism. The protein operates within glycan metabolism; exopolysaccharide biosynthesis. This Rhizobium meliloti (strain 1021) (Ensifer meliloti) protein is UDP-glucose 4-epimerase (exoB).